A 319-amino-acid chain; its full sequence is 4-diphosphocytidyl-2-C-methyl-D-erythritol kinase (319 aa).

Lys18 is a catalytic residue. Residue 103-113 (PIGAGLAGGST) coordinates ATP. The active site involves Asp145.

The protein belongs to the GHMP kinase family. IspE subfamily.

It catalyses the reaction 4-CDP-2-C-methyl-D-erythritol + ATP = 4-CDP-2-C-methyl-D-erythritol 2-phosphate + ADP + H(+). Its pathway is isoprenoid biosynthesis; isopentenyl diphosphate biosynthesis via DXP pathway; isopentenyl diphosphate from 1-deoxy-D-xylulose 5-phosphate: step 3/6. Functionally, catalyzes the phosphorylation of the position 2 hydroxy group of 4-diphosphocytidyl-2C-methyl-D-erythritol. The polypeptide is 4-diphosphocytidyl-2-C-methyl-D-erythritol kinase (Prochlorococcus marinus (strain NATL1A)).